A 631-amino-acid polypeptide reads, in one-letter code: 1-deoxy-D-xylulose-5-phosphate synthase (631 aa).

Residues histidine 76 and 117 to 119 each bind thiamine diphosphate; that span reads AHS. Aspartate 148 lines the Mg(2+) pocket. Residues 149 to 150, asparagine 177, tyrosine 284, and glutamate 365 contribute to the thiamine diphosphate site; that span reads GA. Asparagine 177 is a Mg(2+) binding site.

It belongs to the transketolase family. DXPS subfamily. As to quaternary structure, homodimer. Requires Mg(2+) as cofactor. It depends on thiamine diphosphate as a cofactor.

It catalyses the reaction D-glyceraldehyde 3-phosphate + pyruvate + H(+) = 1-deoxy-D-xylulose 5-phosphate + CO2. The protein operates within metabolic intermediate biosynthesis; 1-deoxy-D-xylulose 5-phosphate biosynthesis; 1-deoxy-D-xylulose 5-phosphate from D-glyceraldehyde 3-phosphate and pyruvate: step 1/1. In terms of biological role, catalyzes the acyloin condensation reaction between C atoms 2 and 3 of pyruvate and glyceraldehyde 3-phosphate to yield 1-deoxy-D-xylulose-5-phosphate (DXP). The sequence is that of 1-deoxy-D-xylulose-5-phosphate synthase from Methylibium petroleiphilum (strain ATCC BAA-1232 / LMG 22953 / PM1).